The chain runs to 304 residues: Pseudouridine-5'-phosphate glycosidase (304 aa).

The active-site Proton donor is the Glu25. Residues Lys88 and Val108 each coordinate substrate. Asp140 is a binding site for Mn(2+). Position 142-144 (142-144 (SAD)) interacts with substrate. Lys161 acts as the Nucleophile in catalysis.

It belongs to the pseudouridine-5'-phosphate glycosidase family. Homotrimer. The cofactor is Mn(2+).

It carries out the reaction D-ribose 5-phosphate + uracil = psi-UMP + H2O. Its function is as follows. Catalyzes the reversible cleavage of pseudouridine 5'-phosphate (PsiMP) to ribose 5-phosphate and uracil. Functions biologically in the cleavage direction, as part of a pseudouridine degradation pathway. This is Pseudouridine-5'-phosphate glycosidase from Paracoccus denitrificans (strain Pd 1222).